Here is a 383-residue protein sequence, read N- to C-terminus: S-adenosylmethionine synthase 1 (383 aa).

ATP is bound at residue H15. Position 17 (D17) interacts with Mg(2+). Position 43 (E43) interacts with K(+). 2 residues coordinate L-methionine: E56 and Q99. Residues Q99 to R109 form a flexible loop region. Residues D162–K164, R228–F229, D237, R243–K244, A260, and K264 contribute to the ATP site. D237 contributes to the L-methionine binding site. An L-methionine-binding site is contributed by K268.

This sequence belongs to the AdoMet synthase family. As to quaternary structure, homotetramer; dimer of dimers. Requires Mg(2+) as cofactor. K(+) is required as a cofactor.

The protein resides in the cytoplasm. It carries out the reaction L-methionine + ATP + H2O = S-adenosyl-L-methionine + phosphate + diphosphate. The protein operates within amino-acid biosynthesis; S-adenosyl-L-methionine biosynthesis; S-adenosyl-L-methionine from L-methionine: step 1/1. Its function is as follows. Catalyzes the formation of S-adenosylmethionine (AdoMet) from methionine and ATP. The overall synthetic reaction is composed of two sequential steps, AdoMet formation and the subsequent tripolyphosphate hydrolysis which occurs prior to release of AdoMet from the enzyme. The polypeptide is S-adenosylmethionine synthase 1 (Rhodospirillum rubrum (strain ATCC 11170 / ATH 1.1.1 / DSM 467 / LMG 4362 / NCIMB 8255 / S1)).